The chain runs to 535 residues: Peptide chain release factor 3 (535 aa).

A tr-type G domain is found at 8 to 276 (ARRRTFAIIS…ALVDLAPQPG (269 aa)). Residues 17 to 24 (SHPDAGKT), 85 to 89 (DTPGH), and 139 to 142 (NKMD) each bind GTP.

Belongs to the TRAFAC class translation factor GTPase superfamily. Classic translation factor GTPase family. PrfC subfamily.

It localises to the cytoplasm. Its function is as follows. Increases the formation of ribosomal termination complexes and stimulates activities of RF-1 and RF-2. It binds guanine nucleotides and has strong preference for UGA stop codons. It may interact directly with the ribosome. The stimulation of RF-1 and RF-2 is significantly reduced by GTP and GDP, but not by GMP. The sequence is that of Peptide chain release factor 3 from Bordetella avium (strain 197N).